The primary structure comprises 338 residues: Phosphatidate cytidylyltransferase, mitochondrial (338 aa).

The protein belongs to the TAM41 family. Mg(2+) is required as a cofactor.

The protein localises to the mitochondrion inner membrane. The catalysed reaction is a 1,2-diacyl-sn-glycero-3-phosphate + CTP + H(+) = a CDP-1,2-diacyl-sn-glycerol + diphosphate. It functions in the pathway phospholipid metabolism; CDP-diacylglycerol biosynthesis; CDP-diacylglycerol from sn-glycerol 3-phosphate: step 3/3. In terms of biological role, catalyzes the conversion of phosphatidic acid (PA) to CDP-diacylglycerol (CDP-DAG), an essential intermediate in the synthesis of phosphatidylglycerol, cardiolipin and phosphatidylinositol. In Danio rerio (Zebrafish), this protein is Phosphatidate cytidylyltransferase, mitochondrial (tamm41).